A 155-amino-acid polypeptide reads, in one-letter code: Small ribosomal subunit protein uS7c (155 aa).

It belongs to the universal ribosomal protein uS7 family. As to quaternary structure, part of the 30S ribosomal subunit.

It is found in the plastid. The protein resides in the chloroplast. One of the primary rRNA binding proteins, it binds directly to 16S rRNA where it nucleates assembly of the head domain of the 30S subunit. The sequence is that of Small ribosomal subunit protein uS7c (rps7) from Saururus cernuus (Lizard's tail).